Reading from the N-terminus, the 86-residue chain is Small ribosomal subunit protein uS17 (86 aa).

This sequence belongs to the universal ribosomal protein uS17 family. As to quaternary structure, part of the 30S ribosomal subunit.

Its function is as follows. One of the primary rRNA binding proteins, it binds specifically to the 5'-end of 16S ribosomal RNA. This Caldicellulosiruptor bescii (strain ATCC BAA-1888 / DSM 6725 / KCTC 15123 / Z-1320) (Anaerocellum thermophilum) protein is Small ribosomal subunit protein uS17.